Reading from the N-terminus, the 205-residue chain is Glycerol-3-phosphate acyltransferase (205 aa).

Over 1–3 (MSA) the chain is Periplasmic. A helical membrane pass occupies residues 4–24 (IAPGMILIAYLCGSISSAILV). Topologically, residues 25-52 (CRLCGLPDPRTSGSGNPGATNVLRIGGK) are cytoplasmic. A helical transmembrane segment spans residues 53–73 (GAAVAVLIFDVLKGMLPVWGA). Residues 74–80 (YELGVSP) lie on the Periplasmic side of the membrane. The helical transmembrane segment at 81–101 (FWLGLIAIAACLGHIWPVFFG) threads the bilayer. Residues 102–111 (FKGGKGVATA) are Cytoplasmic-facing. A helical membrane pass occupies residues 112 to 132 (FGAIAPISWDLTGVMAGTWLL). At 133–137 (TVLLS) the chain is on the periplasmic side. Residues 138–158 (GYSSLGAIVSALIAPFYVWWF) form a helical membrane-spanning segment. Residues 159-205 (KPQFTFPVSMLSCLILLRHHDNIQRLWRRQETKIWTKFKRKREKDPE) lie on the Cytoplasmic side of the membrane.

Belongs to the PlsY family. In terms of assembly, probably interacts with PlsX.

The protein resides in the cell inner membrane. The catalysed reaction is sn-glycerol 3-phosphate + an acyl-CoA = a 1-acyl-sn-glycero-3-phosphate + CoA. It catalyses the reaction a fatty acyl-[ACP] + sn-glycerol 3-phosphate = a 1-acyl-sn-glycero-3-phosphate + holo-[ACP]. Its pathway is lipid metabolism; phospholipid metabolism. Catalyzes the transfer of an acyl group from acyl-ACP to glycerol-3-phosphate (G3P) to form lysophosphatidic acid (LPA). This enzyme can also utilize acyl-CoA as fatty acyl donor, but not acyl-PO(4). This chain is Glycerol-3-phosphate acyltransferase, found in Shigella flexneri serotype 5b (strain 8401).